The following is a 359-amino-acid chain: Glycerol-1-phosphate dehydrogenase [NAD(P)+] (359 aa).

Residues 107–111 and 129–132 contribute to the NAD(+) site; these read GRVID and TAAS. A substrate-binding site is contributed by aspartate 134. Serine 138 is a binding site for NAD(+). Aspartate 181 is a binding site for substrate. Residues aspartate 181 and histidine 261 each contribute to the Zn(2+) site. A substrate-binding site is contributed by histidine 265. Histidine 277 lines the Zn(2+) pocket.

This sequence belongs to the glycerol-1-phosphate dehydrogenase family. The cofactor is Zn(2+).

The protein resides in the cytoplasm. The enzyme catalyses sn-glycerol 1-phosphate + NAD(+) = dihydroxyacetone phosphate + NADH + H(+). It catalyses the reaction sn-glycerol 1-phosphate + NADP(+) = dihydroxyacetone phosphate + NADPH + H(+). It participates in membrane lipid metabolism; glycerophospholipid metabolism. In terms of biological role, catalyzes the NAD(P)H-dependent reduction of dihydroxyacetonephosphate (DHAP or glycerone phosphate) to glycerol 1-phosphate (G1P). The G1P thus generated is used as the glycerophosphate backbone of phospholipids in the cellular membranes of Archaea. In Methanosphaerula palustris (strain ATCC BAA-1556 / DSM 19958 / E1-9c), this protein is Glycerol-1-phosphate dehydrogenase [NAD(P)+].